Consider the following 679-residue polypeptide: MVKNLLVELGLEEMPAYVVTPSMKQLRDKMGAFLTDHRLTFEKIEMFSTPRRLAVRVVGLADKQSDLTEDFKGPSKKIALDADGNFTKAAEGFVRGKGLTVEDITFREIKGEEYVYVTKEEIGRPVEEIIPAVTEVLQALTFPVSMHWANNTFEYIRPVHTLTVLLDEQAFDLDFLDIKSGRTSRGHRFLGQETEIASADSYEDDLRAQFVIASPLERGDMIVDQIQALEEEHGVSIEIDEDLLNEVLNLVEYPTAFLGNFDAKYLEVPEEVLVTSMKEHQRYFVVRDSEGKLLPHFISVRNGNAEHLENVIKGNEKVLVARLEDGEFFWREDQKLAIADLVEKLNNVTFHEKIGSLAEHMERTGKIAALLAQEAGLDADETADLARAAAIYKFDLLTGMVGEFDELQGIMGEKYALLAGENAAVAAAIREHYMPTSADGELPDTKVGAVLALADKLDTILSFFSVGLIPSGSNDPYALRRATQGVVRILDKFGWNIDLAQLLGRLYELKFDSLSYDNQEAVLDFFRARVEKMMDRSIPKDIVTAVLQSTHFVVRDLVETAALLAEKAQEDNFKSAVESLSRVFNLAEKAQGQTAVNPALFENKEEKDLAAAIEKVVLTSDLAANLDQFFALSPVIDAFFDHTMVMAEDEAVRNNRLALLASLTAKAGQIAQFNQINTK.

Belongs to the class-II aminoacyl-tRNA synthetase family. Tetramer of two alpha and two beta subunits.

Its subcellular location is the cytoplasm. It catalyses the reaction tRNA(Gly) + glycine + ATP = glycyl-tRNA(Gly) + AMP + diphosphate. The sequence is that of Glycine--tRNA ligase beta subunit from Streptococcus gordonii (strain Challis / ATCC 35105 / BCRC 15272 / CH1 / DL1 / V288).